The primary structure comprises 1265 residues: 1-phosphatidylinositol 4,5-bisphosphate phosphodiesterase gamma-2 (1265 aa).

In terms of domain architecture, PH spans 20–131 (RALELGTVMT…WLSGLKILHQ (112 aa)). Positions 312–456 (QDMNNPLSHY…LREKIIIKHK (145 aa)) constitute a PI-PLC X-box domain. Active-site residues include H327 and H372. 2 SH2 domains span residues 532–635 (WFHK…TDPV) and 646–735 (WYYD…RYPV). Residues Y753 and Y759 each carry the phosphotyrosine; by BTK modification. The SH3 domain maps to 769 to 829 (MPQRTVKALY…PSNYVEDIST (61 aa)). Residues 930-1044 (LSDLVVYCKP…GYVLQPESMR (115 aa)) enclose the PI-PLC Y-box domain. The C2 domain maps to 1038-1169 (LQPESMRTEK…SGFRSVPLKN (132 aa)). A Phosphotyrosine; by BTK modification is found at Y1197. Phosphotyrosine is present on residues Y1217 and Y1245.

As to quaternary structure, part of a complex composed of EEIG1, TNFRSF11A/RANK, PLCG2, GAB2, TEC and BTK; complex formation increases in the presence of TNFSF11/RANKL. Interacts (via SH2 domain) with CSF1R (tyrosine phosphorylated). Interacts constitutively with THEMIS2. The cofactor is Ca(2+). In terms of processing, phosphorylated on tyrosine residues by CSF1R. Phosphorylated on tyrosine residues by BTK and SYK; upon ligand-induced activation of a variety of growth factor receptors and immune system receptors. Phosphorylation leads to increased phospholipase activity.

It is found in the membrane raft. It catalyses the reaction a 1,2-diacyl-sn-glycero-3-phospho-(1D-myo-inositol-4,5-bisphosphate) + H2O = 1D-myo-inositol 1,4,5-trisphosphate + a 1,2-diacyl-sn-glycerol + H(+). The production of the second messenger molecules diacylglycerol (DAG) and inositol 1,4,5-trisphosphate (IP3) is mediated by activated phosphatidylinositol-specific phospholipase C enzymes. It is a crucial enzyme in transmembrane signaling. In Homo sapiens (Human), this protein is 1-phosphatidylinositol 4,5-bisphosphate phosphodiesterase gamma-2.